Reading from the N-terminus, the 218-residue chain is uncharacterized protein (218 aa).

The transit peptide at 1 to 28 directs the protein to the chloroplast; that stretch reads MLSLQCLPPFFISVPNRSTNSCSTAPLR.

It belongs to the SixA phosphatase family.

It is found in the plastid. Its subcellular location is the chloroplast. This is an uncharacterized protein from Arabidopsis thaliana (Mouse-ear cress).